The primary structure comprises 301 residues: Elongation factor Ts (301 aa).

Positions 82-85 (TDFV) are involved in Mg(2+) ion dislocation from EF-Tu.

Belongs to the EF-Ts family.

Its subcellular location is the cytoplasm. Associates with the EF-Tu.GDP complex and induces the exchange of GDP to GTP. It remains bound to the aminoacyl-tRNA.EF-Tu.GTP complex up to the GTP hydrolysis stage on the ribosome. The sequence is that of Elongation factor Ts from Hyphomonas neptunium (strain ATCC 15444).